A 169-amino-acid chain; its full sequence is Large ribosomal subunit protein uL10 (169 aa).

This sequence belongs to the universal ribosomal protein uL10 family. Part of the ribosomal stalk of the 50S ribosomal subunit. The N-terminus interacts with L11 and the large rRNA to form the base of the stalk. The C-terminus forms an elongated spine to which L12 dimers bind in a sequential fashion forming a multimeric L10(L12)X complex.

Its function is as follows. Forms part of the ribosomal stalk, playing a central role in the interaction of the ribosome with GTP-bound translation factors. In Rickettsia felis (strain ATCC VR-1525 / URRWXCal2) (Rickettsia azadi), this protein is Large ribosomal subunit protein uL10.